A 795-amino-acid chain; its full sequence is MKFSELWLREWVNPAVDSETLSEQITMAGLEVDGVEPVAGAFHGVVVGEVVECGQHPNADKLRVTKVNVGGERLLDIVCGAPNCRQGLKVAVATVGAVLPGDFKIKAAKLRGEPSEGMLCSFSELGISDDHDGIIELPADAPIGTDIRDYLKLDDNAIEISVTPNRADCLGIIGVARDVAVLNQLALNEPTIEPVAATIQDTFPIQVEAPQACPRYLGRVVKGINVKAATPLWMREKLRRCGIRSIDPVVDVTNYVLLELGQPMHAFDLDRLNGSIIVRMAEEGETLTLLDGNEVKLNADTLVIADQQNALAMGGIFGGEHSGVNEETQNVLLECAYFNPLSITGRARRHGLHTDASHRYERGVDPALQHKAIERATRLLIDICGGEAGPVVDITSDADLPTRATITLRREKLDRLIGHVIADEQVSDILQRLGCNVVKTDAGWQATAPSWRFDMEIEEDLVEEVARIYGYNNIPNIPTQAPLIMTSHREASLALKRVKTLLVDHGYQEAITYSFVDPKIQGLIHPNEASLSLPSPISVEMSVMRLSLWSGLLSAAVYNQNRQQSRLRLFESGLRFVPDASADLGIRQDLMLSGVITGTRYEEHWDLARQAVDFYDLKGDLEAVLALTGKLSEVEFKAENNPALHPGQSAAIYLCGERIGFIGVIHPELERKLDLNGRTVVFELLWDKVADRVLPDANEISRFPANRRDIAVVVAENVPAGDILAECKKVGANQLVGVNLFDVYRGKGVAEGYKSLAISLTLQDTTRTLAEEEIAATVAECVAALKQRFQASLRD.

The 110-residue stretch at 39–148 folds into the tRNA-binding domain; the sequence is AGAFHGVVVG…ADAPIGTDIR (110 aa). In terms of domain architecture, B5 spans 401–476; that stretch reads PTRATITLRR…RIYGYNNIPN (76 aa). Residues aspartate 454, aspartate 460, glutamate 463, and glutamate 464 each contribute to the Mg(2+) site. The region spanning 701–794 is the FDX-ACB domain; the sequence is SRFPANRRDI…LKQRFQASLR (94 aa).

The protein belongs to the phenylalanyl-tRNA synthetase beta subunit family. Type 1 subfamily. In terms of assembly, tetramer of two alpha and two beta subunits. It depends on Mg(2+) as a cofactor.

Its subcellular location is the cytoplasm. It catalyses the reaction tRNA(Phe) + L-phenylalanine + ATP = L-phenylalanyl-tRNA(Phe) + AMP + diphosphate + H(+). The chain is Phenylalanine--tRNA ligase beta subunit from Pectobacterium atrosepticum (strain SCRI 1043 / ATCC BAA-672) (Erwinia carotovora subsp. atroseptica).